Here is a 65-residue protein sequence, read N- to C-terminus: Sulfur carrier protein TtuB (65 aa).

At Gly65 the chain carries 1-thioglycine; alternate. Gly65 bears the Glycyl adenylate; alternate mark. Gly65 participates in a covalent cross-link: Glycyl cysteine thioester (Gly-Cys) (interchain with C-192 in TtuC); alternate. Gly65 participates in a covalent cross-link: Glycyl lysine isopeptide (Gly-Lys) (interchain with K-? in acceptor proteins); alternate.

Belongs to the TtuB family. In terms of assembly, is able to form a heterocomplex with TtuA. The C-terminal glycine residue of TtuB is first activated by TtuC as an acyl-adenylate (TtuB-COAMP), and then converted to the thiocarboxylate form (TtuB-COSH) by the cysteine desulfurases IscS or SufS.

The protein operates within tRNA modification. In terms of biological role, required for the 2-thiolation of 5-methyluridine residue at position 54 in the T loop of tRNAs, leading to 5-methyl-2-thiouridine (m(5)s(2)U or s(2)T). This modification allows thermal stabilization of tRNAs in thermophilic microorganisms, and is essential for cell growth at high temperatures. Thiocarboxylated TtuB functions as the sulfur donor in the sulfurtransferase reaction catalyzed by TtuA. TtuB also functions as a protein modifier covalently attached to lysine residues of the target proteins TtuA and TtuC. TtuB conjugation might play a regulatory role to ensure appropriate sulfur transfer in cells. This chain is Sulfur carrier protein TtuB, found in Thermus thermophilus (strain ATCC BAA-163 / DSM 7039 / HB27).